A 94-amino-acid polypeptide reads, in one-letter code: Co-chaperonin GroES (94 aa).

It belongs to the GroES chaperonin family. In terms of assembly, heptamer of 7 subunits arranged in a ring. Interacts with the chaperonin GroEL.

It localises to the cytoplasm. Functionally, together with the chaperonin GroEL, plays an essential role in assisting protein folding. The GroEL-GroES system forms a nano-cage that allows encapsulation of the non-native substrate proteins and provides a physical environment optimized to promote and accelerate protein folding. GroES binds to the apical surface of the GroEL ring, thereby capping the opening of the GroEL channel. This chain is Co-chaperonin GroES, found in Streptococcus oralis.